The following is an 88-amino-acid chain: Large ribosomal subunit protein bL27 (88 aa).

The disordered stretch occupies residues 1–24 (MATKKSGGSSGNGRDSRGRRLGVK).

It belongs to the bacterial ribosomal protein bL27 family.

The sequence is that of Large ribosomal subunit protein bL27 from Ehrlichia chaffeensis (strain ATCC CRL-10679 / Arkansas).